Reading from the N-terminus, the 337-residue chain is tRNA N6-adenosine threonylcarbamoyltransferase (337 aa).

The Fe cation site is built by His-111 and His-115. Residues 134–138, Asp-167, Gly-180, and Asn-272 contribute to the substrate site; that span reads LVSGG. Asp-300 is a Fe cation binding site.

This sequence belongs to the KAE1 / TsaD family. Requires Fe(2+) as cofactor.

The protein resides in the cytoplasm. The catalysed reaction is L-threonylcarbamoyladenylate + adenosine(37) in tRNA = N(6)-L-threonylcarbamoyladenosine(37) in tRNA + AMP + H(+). Required for the formation of a threonylcarbamoyl group on adenosine at position 37 (t(6)A37) in tRNAs that read codons beginning with adenine. Is involved in the transfer of the threonylcarbamoyl moiety of threonylcarbamoyl-AMP (TC-AMP) to the N6 group of A37, together with TsaE and TsaB. TsaD likely plays a direct catalytic role in this reaction. This is tRNA N6-adenosine threonylcarbamoyltransferase from Escherichia coli O157:H7.